Here is a 583-residue protein sequence, read N- to C-terminus: Potassium-transporting ATPase potassium-binding subunit (583 aa).

Transmembrane regions (helical) follow at residues 3-23 (NIIWQCLLYLSLLTALAWPLG), 66-86 (MACVIAFSAVSLVALTALLMA), 135-155 (GLTVQNFVSAAVGIAVLFALI), 177-197 (VLYILLPLSLVMSLLLIEQGV), 266-286 (LEMLALLLIPAALCFTFGAKI), 293-313 (VAIFAAMFILLTSAVSFTVQA), 402-422 (GLYGMLAFVLLTVFLAGLMVG), 440-460 (AVVVCLTTPVVILAGGGLMCL), 506-526 (VLLGVLMLAGRFAPIAAILAM), and 549-569 (LFIFLLIFVILLVGALSFFPA).

Belongs to the KdpA family. In terms of assembly, the system is composed of three essential subunits: KdpA, KdpB and KdpC.

Its subcellular location is the cell inner membrane. In terms of biological role, part of the high-affinity ATP-driven potassium transport (or Kdp) system, which catalyzes the hydrolysis of ATP coupled with the electrogenic transport of potassium into the cytoplasm. This subunit binds the periplasmic potassium ions and delivers the ions to the membrane domain of KdpB through an intramembrane tunnel. This is Potassium-transporting ATPase potassium-binding subunit from Desulfovibrio desulfuricans (strain ATCC 27774 / DSM 6949 / MB).